A 448-amino-acid polypeptide reads, in one-letter code: Probable glycine dehydrogenase (decarboxylating) subunit 1 (448 aa).

The protein belongs to the GcvP family. N-terminal subunit subfamily. The glycine cleavage system is composed of four proteins: P, T, L and H. In this organism, the P 'protein' is a heterodimer of two subunits.

It catalyses the reaction N(6)-[(R)-lipoyl]-L-lysyl-[glycine-cleavage complex H protein] + glycine + H(+) = N(6)-[(R)-S(8)-aminomethyldihydrolipoyl]-L-lysyl-[glycine-cleavage complex H protein] + CO2. Its function is as follows. The glycine cleavage system catalyzes the degradation of glycine. The P protein binds the alpha-amino group of glycine through its pyridoxal phosphate cofactor; CO(2) is released and the remaining methylamine moiety is then transferred to the lipoamide cofactor of the H protein. This chain is Probable glycine dehydrogenase (decarboxylating) subunit 1, found in Shouchella clausii (strain KSM-K16) (Alkalihalobacillus clausii).